The sequence spans 563 residues: MSENFRSKAITQGVQRSPNRAMLRAVGFQDADFTKAIVGVANGYSTITPCNMGINQLAQRAEAGINTAGAKPQIFGTITISDGISMGTEGMKYSLVSREVIADSIETVCNGQSLDGVIAIGGCDKNMPGAMIAIARINIPAIFVYGGTIKPGHYNGKDLTVVSSFEAVGEYSAGKIDENELLAVERNACPGAGSCGGMYTANTMSSAFEALGMSLPYSSTMAAEDDEKADSTEESAKVLVEAIRHQLLPRQIITRKSIENAISVIMAVGGSTNAVLHFLAIARAAGVELNLDDFETIRGRVPVLCDLKPSGRYVATDLHKAGGIPQVMKMLLVHGLLHGDCMTITGKTIAEVLADIPEEPSPNQDVIRPWNNPMYAQGHLAILKGNLATEGAVAKITGVKNPVITGPAKVFESEEDCLDAILAGKIKAGDVIVIRYEGPKGGPGMREMLAPTSAIIGAGLGDSVGLITDGRFSGGTYGMVVGHVAPEAAVGGAIALVQEGDSITIDAHARSLQLNISDEELTRRRANWQPRPPRYTTGILAKYAKLVASSSVGAVTDLDLFNK.

Residue C50 coordinates [2Fe-2S] cluster. D82 is a binding site for Mg(2+). [2Fe-2S] cluster is bound at residue C123. Positions 124 and 125 each coordinate Mg(2+). K125 carries the N6-carboxylysine modification. C195 contacts [2Fe-2S] cluster. A Mg(2+)-binding site is contributed by E447. Catalysis depends on S473, which acts as the Proton acceptor.

This sequence belongs to the IlvD/Edd family. As to quaternary structure, homodimer. It depends on [2Fe-2S] cluster as a cofactor. Mg(2+) serves as cofactor.

It catalyses the reaction (2R)-2,3-dihydroxy-3-methylbutanoate = 3-methyl-2-oxobutanoate + H2O. It carries out the reaction (2R,3R)-2,3-dihydroxy-3-methylpentanoate = (S)-3-methyl-2-oxopentanoate + H2O. The protein operates within amino-acid biosynthesis; L-isoleucine biosynthesis; L-isoleucine from 2-oxobutanoate: step 3/4. Its pathway is amino-acid biosynthesis; L-valine biosynthesis; L-valine from pyruvate: step 3/4. In terms of biological role, functions in the biosynthesis of branched-chain amino acids. Catalyzes the dehydration of (2R,3R)-2,3-dihydroxy-3-methylpentanoate (2,3-dihydroxy-3-methylvalerate) into 2-oxo-3-methylpentanoate (2-oxo-3-methylvalerate) and of (2R)-2,3-dihydroxy-3-methylbutanoate (2,3-dihydroxyisovalerate) into 2-oxo-3-methylbutanoate (2-oxoisovalerate), the penultimate precursor to L-isoleucine and L-valine, respectively. The protein is Dihydroxy-acid dehydratase of Nostoc sp. (strain PCC 7120 / SAG 25.82 / UTEX 2576).